We begin with the raw amino-acid sequence, 1291 residues long: Capping protein-inhibiting regulator of actin dynamics (1291 aa).

Phosphoserine occurs at positions 7 and 28. Disordered regions lie at residues 48 to 71 (KFGQ…SSEE), 84 to 137 (QQDI…AGTI), 159 to 221 (HKLA…HEEK), 234 to 253 (KCKR…EQRR), 267 to 663 (QELL…ASHA), and 701 to 1238 (LGLS…TSVT). S132 is subject to Phosphoserine. Basic residues predominate over residues 159 to 176 (HKLAVKPKNQRVSRKHRW). Polar residues predominate over residues 184 to 199 (EPGSFESQSSLDQNGQ). Basic and acidic residues predominate over residues 201–221 (GEDKHIWHGEEPEPLESHEEK). Residues 270–291 (LEEEEEGEEEEEVKEEGEEGEE) show a composition bias toward acidic residues. 3 stretches are compositionally biased toward basic and acidic residues: residues 302–318 (PPEE…RCTE), 326–461 (DPAR…EDAK), and 470–483 (EAKR…KETP). Residues 324–560 (ADDPARLEAE…DLDAHCGGVD (237 aa)) form a required for interaction with actin-capping proteins region. Residue T482 is modified to Phosphothreonine. Phosphoserine occurs at positions 493 and 510. Basic and acidic residues-rich tracts occupy residues 506–527 (ADQR…REDL) and 534–543 (EIAEEPRGEG). Positions 580–593 (EGTPAPEENEATAA) are enriched in low complexity. Residues 594–612 (DIDRKVEELRWQEVDERQT) are compositionally biased toward basic and acidic residues. Residue S636 is modified to Phosphoserine. T639 is modified (phosphothreonine). The span at 749-778 (KNSEGDQRGDREPARAGDEPVPRARCDSRG) shows a compositional bias: basic and acidic residues. Position 867 is a phosphoserine (S867). Residues 875–888 (TESTTTLDSETTSD) are compositionally biased toward low complexity. The segment covering 969 to 983 (QERKPALSPRKDSAE) has biased composition (basic and acidic residues). T1033 is modified (phosphothreonine). S1037 carries the post-translational modification Phosphoserine. Residues 1056 to 1070 (GKLDSEPSETAKESS) are compositionally biased toward basic and acidic residues. S1076 is modified (phosphoserine). Composition is skewed to basic and acidic residues over residues 1081–1098 (EELK…EKKP), 1117–1141 (TGRK…EKVE), and 1157–1182 (GFRE…KLSK). Polar residues-rich tracts occupy residues 1183 to 1197 (ETVS…SRAS) and 1229 to 1238 (KSNTLPTSVT).

Directly interacts with actin-capping proteins CAPZA1, CAPZA2 and CAPZB; this interaction decreases the binding of capping proteins to actin. As to expression, expressed in the small intestine (at protein level).

The protein localises to the cytoplasm. Its subcellular location is the cytosol. Functionally, involved in epithelial cell integrity by acting on the dynamics of the actin cytoskeleton. Positively regulates the actin polymerization, by inhibiting the interaction of actin-capping proteins with actin. The protein is Capping protein-inhibiting regulator of actin dynamics of Mus musculus (Mouse).